The sequence spans 32 residues: Photosystem II reaction center protein Z (32 aa).

The chain crosses the membrane as a helical span at residues 9–31 (FILLGAVTWAILVFIVGSLNSYV).

The protein belongs to the PsbZ family. As to quaternary structure, PSII is composed of 1 copy each of membrane proteins PsbA, PsbB, PsbC, PsbD, PsbE, PsbF, PsbH, PsbI, PsbJ, PsbK, PsbL, PsbM, PsbT, PsbY, PsbZ, Psb30/Ycf12, at least 3 peripheral proteins of the oxygen-evolving complex and a large number of cofactors. It forms dimeric complexes.

It is found in the plastid. It localises to the chloroplast thylakoid membrane. Its function is as follows. May control the interaction of photosystem II (PSII) cores with the light-harvesting antenna, regulates electron flow through the 2 photosystem reaction centers. PSII is a light-driven water plastoquinone oxidoreductase, using light energy to abstract electrons from H(2)O, generating a proton gradient subsequently used for ATP formation. The polypeptide is Photosystem II reaction center protein Z (Euglena stellata).